The following is a 148-amino-acid chain: Large ribosomal subunit protein uL15 (148 aa).

The segment at 1–51 (MNLSNLKPAEGSTKTRKRIGRGPGSGLGGTSTRGHKGAKSRSGYSKKIGFE) is disordered. Over residues 21-31 (RGPGSGLGGTS) the composition is skewed to gly residues.

Belongs to the universal ribosomal protein uL15 family. In terms of assembly, part of the 50S ribosomal subunit.

Its function is as follows. Binds to the 23S rRNA. The polypeptide is Large ribosomal subunit protein uL15 (Phocaeicola vulgatus (strain ATCC 8482 / DSM 1447 / JCM 5826 / CCUG 4940 / NBRC 14291 / NCTC 11154) (Bacteroides vulgatus)).